A 493-amino-acid polypeptide reads, in one-letter code: Lysine--tRNA ligase (493 aa).

Residues Glu-400 and Glu-407 each coordinate Mg(2+).

The protein belongs to the class-II aminoacyl-tRNA synthetase family. Homodimer. The cofactor is Mg(2+).

It is found in the cytoplasm. It carries out the reaction tRNA(Lys) + L-lysine + ATP = L-lysyl-tRNA(Lys) + AMP + diphosphate. The protein is Lysine--tRNA ligase of Syntrophomonas wolfei subsp. wolfei (strain DSM 2245B / Goettingen).